A 775-amino-acid polypeptide reads, in one-letter code: Chloride channel protein CLC-a (775 aa).

The disordered stretch occupies residues 1 to 28 (MDEDGNLQISNSNYNGEEEGEDPENNTL). Helical transmembrane passes span 88 to 108 (TLAC…NLAV), 131 to 151 (GLMV…VLVV), 178 to 198 (FGFT…AAGL), 206 to 226 (LVHI…DNHR), 248 to 268 (GSAS…LFAL), 278 to 298 (ALLW…RAFI), 328 to 348 (AADI…GSLY), 371 to 391 (VLLS…LPFL), 453 to 473 (MVSL…TFGI), 478 to 498 (GLFL…GTAM), 510 to 530 (AVLG…SLCV), and 531 to 551 (IFLE…VLLI). CBS domains lie at 595 to 658 (AKPP…FLNE) and 703 to 768 (TNTT…HLDK). Residues 730–750 (HLLVVPKIQASGMSPVIGILT) traverse the membrane as a helical segment.

The protein belongs to the chloride channel (TC 2.A.49) family. In terms of assembly, homodimer. Interacts with PP2A5. Broadly expressed in the plant.

It localises to the membrane. Voltage-gated chloride channel that could play a role in the regulation of nitrate content. This Arabidopsis thaliana (Mouse-ear cress) protein is Chloride channel protein CLC-a (CLC-A).